A 130-amino-acid polypeptide reads, in one-letter code: Small ribosomal subunit protein uS9 (130 aa).

It belongs to the universal ribosomal protein uS9 family.

In Yersinia pseudotuberculosis serotype O:1b (strain IP 31758), this protein is Small ribosomal subunit protein uS9.